We begin with the raw amino-acid sequence, 1517 residues long: DNA-directed RNA polymerase subunit beta' (1517 aa).

Positions 71, 73, 86, and 89 each coordinate Zn(2+). Mg(2+)-binding residues include D482, D484, and D486. Residues C812, C886, C893, and C896 each coordinate Zn(2+).

Belongs to the RNA polymerase beta' chain family. The RNAP catalytic core consists of 2 alpha, 1 beta, 1 beta' and 1 omega subunit. When a sigma factor is associated with the core the holoenzyme is formed, which can initiate transcription. Requires Mg(2+) as cofactor. Zn(2+) is required as a cofactor.

It catalyses the reaction RNA(n) + a ribonucleoside 5'-triphosphate = RNA(n+1) + diphosphate. Functionally, DNA-dependent RNA polymerase catalyzes the transcription of DNA into RNA using the four ribonucleoside triphosphates as substrates. The polypeptide is DNA-directed RNA polymerase subunit beta' (Campylobacter jejuni subsp. jejuni serotype O:2 (strain ATCC 700819 / NCTC 11168)).